Here is a 125-residue protein sequence, read N- to C-terminus: Large ribosomal subunit protein bL20 (125 aa).

The protein belongs to the bacterial ribosomal protein bL20 family.

In terms of biological role, binds directly to 23S ribosomal RNA and is necessary for the in vitro assembly process of the 50S ribosomal subunit. It is not involved in the protein synthesizing functions of that subunit. The protein is Large ribosomal subunit protein bL20 of Rhodospirillum rubrum (strain ATCC 11170 / ATH 1.1.1 / DSM 467 / LMG 4362 / NCIMB 8255 / S1).